The following is a 405-amino-acid chain: Aminodeoxyfutalosine deaminase (405 aa).

The a divalent metal cation site is built by H61 and H63. The substrate site is built by E141, S145, and H179. H206 contributes to the a divalent metal cation binding site. E209 serves as the catalytic Proton donor. D306 serves as a coordination point for a divalent metal cation.

Belongs to the metallo-dependent hydrolases superfamily. A divalent metal cation serves as cofactor.

The enzyme catalyses 6-amino-6-deoxyfutalosine + H2O + H(+) = futalosine + NH4(+). Its pathway is quinol/quinone metabolism; menaquinone biosynthesis. Catalyzes the deamination of aminodeoxyfutalosine (AFL) into futalosine (FL), a step in the biosynthesis of menaquinone (MK, vitamin K2). To a lesser extent, can also deaminate 5'-methylthioadenosine. This is Aminodeoxyfutalosine deaminase from Nitratiruptor sp. (strain SB155-2).